We begin with the raw amino-acid sequence, 121 residues long: Small ribosomal subunit protein eS24 (121 aa).

It belongs to the eukaryotic ribosomal protein eS24 family.

This Pyrobaculum arsenaticum (strain DSM 13514 / JCM 11321 / PZ6) protein is Small ribosomal subunit protein eS24.